The following is a 565-amino-acid chain: Acyl-CoA ligase easD (565 aa).

ATP contacts are provided by residues 213–221 (TSGTSGKQK), 354–359 (HAYGLT), aspartate 438, arginine 457, and lysine 555. Positions 284–354 (DMQLMLKTIE…KLRPTWKINH (71 aa)) are SBD1. The SBD2 stretch occupies residues 355 to 417 (AYGLTETGVV…FNSPSCFLGY (63 aa)).

Belongs to the ATP-dependent AMP-binding enzyme family.

Its pathway is antibiotic biosynthesis. Functionally, acyl-CoA ligase; part of the gene cluster that mediates the biosynthesis of emericellamides, secondary metabolites acting as antibiotics. The biosynthesis of emericellamides initiates from the highly reducing polyketide synthase easB which catalyzes the formation of the linear polyketide chain. EasB produces several polyketides that can be further processed by the downstream enzymes. The polyketides are released from easB as linear polyketide carboxylic acids, which are converted to CoA thioesters by the acyl-CoA ligase easD. The substrates are then loaded onto the acyltransferase easC, which shuttles them to the first thiolation (T) domain of the nonribosomal peptide synthetase easA. EasA then performs condensation of the polyketides with one glycine, two alanine, one valine and one leucine residues. A last step of cyclization leads to the production of emericellamides. This Emericella nidulans (strain FGSC A4 / ATCC 38163 / CBS 112.46 / NRRL 194 / M139) (Aspergillus nidulans) protein is Acyl-CoA ligase easD.